Reading from the N-terminus, the 308-residue chain is Putative transcription elongation factor S-II (308 aa).

Positions 5-84 (EETQSLCKQV…KDWKNVVDGK (80 aa)) constitute a TFIIS N-terminal domain. A disordered region spans residues 82-126 (DGKSKSQDDGGAPPAKKHRKESVEEAKPEKKKIEAPYKRPEPSSR). The segment covering 102-125 (ESVEEAKPEKKKIEAPYKRPEPSS) has biased composition (basic and acidic residues). Positions 148–263 (TRLKSAQLLL…EHQMSVQQGT (116 aa)) constitute a TFIIS central domain. A TFIIS-type zinc finger spans residues 266 to 306 (DMFKCGKCGKKNCTYTQLQTRSSDEPMTTFVFCLECGNRWK). Positions 270, 273, 298, and 301 each coordinate Zn(2+).

The protein belongs to the TFS-II family.

Its subcellular location is the nucleus. Its function is as follows. Necessary for efficient RNA polymerase II transcription elongation past template-encoded arresting sites. The arresting sites in DNA have the property of trapping a certain fraction of elongating RNA polymerases that pass through, resulting in locked ternary complexes. Cleavage of the nascent transcript by S-II allows the resumption of elongation from the new 3'-terminus. In Caenorhabditis elegans, this protein is Putative transcription elongation factor S-II.